We begin with the raw amino-acid sequence, 83 residues long: CLAVATA3/ESR (CLE)-related protein 3 (83 aa).

A signal peptide spans 1 to 24; the sequence is MASLKLWVCLVLLLVLELTSVHEC. Residues 38–58 are a coiled coil; it reads RLKKIRRELFERLKEMKGRSE. A disordered region spans residues 53–83; that stretch reads MKGRSEGEETILGNTLDSKRLSPGGPDPRHH. Pro75 and Pro78 each carry hydroxyproline. Residue Pro78 is glycosylated (O-linked (Ara...) hydroxyproline).

Belongs to the CLV3/ESR signal peptide family. In terms of processing, the O-glycosylation (arabinosylation) of the hydroxyproline Pro-78 enhances binding affinity of the CLE3p peptide for its receptor. In terms of tissue distribution, mostly expressed in roots, stems and apex, and, to a lower extent, in seedlings, leaves, flowers, siliques and pollen.

It is found in the secreted. The protein localises to the extracellular space. Its function is as follows. Extracellular signal peptide that regulates cell fate. In Arabidopsis thaliana (Mouse-ear cress), this protein is CLAVATA3/ESR (CLE)-related protein 3.